An 84-amino-acid polypeptide reads, in one-letter code: MAKTQSPLQWLATTIIRGYQLLISPMMGPRCRFNPTCSHYAIEAIRLHGVVKGCWFAGKRILRCHPLHPGGEDPVPNKKHRCDK.

This sequence belongs to the UPF0161 family.

The protein localises to the cell inner membrane. Its function is as follows. Could be involved in insertion of integral membrane proteins into the membrane. The sequence is that of Putative membrane protein insertion efficiency factor from Shewanella pealeana (strain ATCC 700345 / ANG-SQ1).